The sequence spans 207 residues: MVSLISIVSVVFLLFTTFYHFGEARIINVGGSLDAWKVPESPNHSLNHWAESVRFQVGDALLFKYDSKIDSVLQVTKENYEKCNTQKPLEEHKDGYTTVKLDVSGPYYFISGAPSGNCAKGEKVTVVVQSPNHPKPGPAAVTPTLPPKPSTTPAAPAPAPPTPSPKSSTSTMAPAPAPAKSSAVGLVAGNGIFWASTLVAVIGLAFA.

A signal peptide spans 1–24 (MVSLISIVSVVFLLFTTFYHFGEA). In terms of domain architecture, Phytocyanin spans 25 to 130 (RIINVGGSLD…GEKVTVVVQS (106 aa)). N43 carries N-linked (GlcNAc...) asparagine glycosylation. A disulfide bridge links C83 with C118. The disordered stretch occupies residues 129–179 (QSPNHPKPGPAAVTPTLPPKPSTTPAAPAPAPPTPSPKSSTSTMAPAPAPA). The span at 144 to 164 (TLPPKPSTTPAAPAPAPPTPS) shows a compositional bias: pro residues. A compositionally biased stretch (low complexity) spans 165-179 (PKSSTSTMAPAPAPA). Residue S181 is the site of GPI-anchor amidated serine attachment. Positions 182–207 (SAVGLVAGNGIFWASTLVAVIGLAFA) are cleaved as a propeptide — removed in mature form.

Belongs to the early nodulin-like (ENODL) family. Confined to flowers and siliques.

It localises to the cell membrane. In terms of biological role, may act as a carbohydrate transporter. Required, together with ENODL11, ENODL12, ENODL13, ENODL14 and ENODL15, for male-female communication and pollen tube reception and burst at the synergid cell surface of the female gametophyte. The chain is Early nodulin-like protein 11 from Arabidopsis thaliana (Mouse-ear cress).